The following is a 404-amino-acid chain: V-set and immunoglobulin domain-containing protein 1 (404 aa).

An N-terminal signal peptide occupies residues 1–22 (MMVFAFWKVFLILNCLAGQVNM). Positions 23 to 133 (VQVTIPDTFV…DFFGKNQGIL (111 aa)) constitute an Ig-like V-type domain. Topologically, residues 23–233 (VQVTIPDTFV…EIDLTSSDPE (211 aa)) are extracellular. N-linked (GlcNAc...) asparagine glycosylation occurs at Asn-39. Intrachain disulfides connect Cys-44–Cys-117 and Cys-162–Cys-212. One can recognise an Ig-like C2-type domain in the interval 141-228 (PSKPFCSIQG…GNSSCEIDLT (88 aa)). N-linked (GlcNAc...) asparagine glycosylation is found at Asn-201 and Asn-220. Residues 234–254 (VGIIIGALVGALTGAAIIICV) form a helical membrane-spanning segment. Residues 255 to 404 (VYFARNKVKS…REEEKETVKA (150 aa)) lie on the Cytoplasmic side of the membrane. Disordered regions lie at residues 266–285 (QKNL…HHSR) and 298–404 (EGTL…TVKA). A phosphoserine mark is found at Ser-271 and Ser-272. Positions 301 to 314 (LPSSIHASHNTEPT) are enriched in polar residues. Positions 357 to 383 (MELEPETEPEPEPEPEPQPELESELEP) are enriched in acidic residues. Residues 393–404 (PMREEEKETVKA) are compositionally biased toward basic and acidic residues.

It is found in the membrane. The chain is V-set and immunoglobulin domain-containing protein 1 (Vsig1) from Rattus norvegicus (Rat).